A 361-amino-acid polypeptide reads, in one-letter code: Ribosomal RNA large subunit methyltransferase M (361 aa).

S-adenosyl-L-methionine is bound by residues Ser-187, 220–223 (CPGG), Asp-239, Asp-259, and Asp-276. Catalysis depends on Lys-305, which acts as the Proton acceptor.

The protein belongs to the class I-like SAM-binding methyltransferase superfamily. RNA methyltransferase RlmE family. RlmM subfamily. As to quaternary structure, monomer.

The protein resides in the cytoplasm. It catalyses the reaction cytidine(2498) in 23S rRNA + S-adenosyl-L-methionine = 2'-O-methylcytidine(2498) in 23S rRNA + S-adenosyl-L-homocysteine + H(+). In terms of biological role, catalyzes the 2'-O-methylation at nucleotide C2498 in 23S rRNA. In Shewanella amazonensis (strain ATCC BAA-1098 / SB2B), this protein is Ribosomal RNA large subunit methyltransferase M.